A 133-amino-acid chain; its full sequence is Holo-[acyl-carrier-protein] synthase (133 aa).

The Mg(2+) site is built by Asp-8 and Glu-58.

Belongs to the P-Pant transferase superfamily. AcpS family. The cofactor is Mg(2+).

The protein localises to the cytoplasm. It carries out the reaction apo-[ACP] + CoA = holo-[ACP] + adenosine 3',5'-bisphosphate + H(+). Functionally, transfers the 4'-phosphopantetheine moiety from coenzyme A to a Ser of acyl-carrier-protein. This Sphingopyxis alaskensis (strain DSM 13593 / LMG 18877 / RB2256) (Sphingomonas alaskensis) protein is Holo-[acyl-carrier-protein] synthase.